A 526-amino-acid chain; its full sequence is Efflux pump aunC (526 aa).

A run of 14 helical transmembrane segments spans residues 23-43 (LCYK…CTSL), 64-84 (DVGW…LPFG), 89-109 (FFPI…GSFI), 125-145 (VAGL…TQCV), 155-175 (GFIM…GGAF), 183-203 (WCFY…FFTF), 218-238 (AAGL…CLLL), 254-274 (IIAL…LQLW), 296-316 (LYGF…PIWF), 339-359 (VIFA…GPFM), 360-380 (LLSA…HPSS), 386-406 (IGYQ…PVFV), 418-438 (TATA…VSVA), and 491-511 (VHTF…ATVI).

It belongs to the major facilitator superfamily. TCR/Tet family.

Its subcellular location is the cell membrane. In terms of biological role, efflux pump; part of the gene cluster that mediates the biosynthesis of aurasperone B, a dimeric gamma-naphthopyrone. The protein is Efflux pump aunC of Aspergillus niger (strain ATCC 1015 / CBS 113.46 / FGSC A1144 / LSHB Ac4 / NCTC 3858a / NRRL 328 / USDA 3528.7).